Reading from the N-terminus, the 989-residue chain is Voltage-gated delayed rectifier potassium channel KCNH1 (989 aa).

At 1 to 220 the chain is on the cytoplasmic side; sequence MTMAGGRRGL…LHYCVFKTTW (220 aa). The PAS domain occupies 14-94; the sequence is QNTFLENIVR…QTFENYEMNS (81 aa). The region spanning 93–145 is the PAC domain; it reads NSFEILMYKKNRTPVWFFVKIAPIRNEQDKVVLFLCTFSDITAFKQPIEDDSC. A required for phosphatidylinositol bisphosphate binding region spans residues 151–162; the sequence is FARLTRALTSSR. The helical transmembrane segment at 221–241 threads the bilayer; the sequence is DWIILILTFYTAILVPYNVSF. Residues 242 to 248 lie on the Extracellular side of the membrane; the sequence is KTRQNNV. Residues 249-269 traverse the membrane as a helical segment; that stretch reads AWLVVDSIVDVIFLVDIVLNF. Residues 270-290 lie on the Cytoplasmic side of the membrane; it reads HTTFVGPAGEVISDPKLIRMN. A helical membrane pass occupies residues 291-309; it reads YLKTWFVIDLLSCLPYDVI. The Extracellular portion of the chain corresponds to 310–345; it reads NAFENVDEVSAFMGDPGKIGFADQIPPPLEGRESQG. Residues 346–368 form a helical; Voltage-sensor membrane-spanning segment; sequence ISSLFSSLKVVRLLRLGRVARKL. At 369-377 the chain is on the cytoplasmic side; the sequence is DHYIEYGAA. The helical transmembrane segment at 378–399 threads the bilayer; sequence VLVLLVCVFGLAAHWMACIWYS. Residues 400–448 lie on the Extracellular side of the membrane; sequence IGDYEIFDEDTKTIRNNSWLYQLALDIGTPYQFNGSGSGKWEGGPSKNS. Residues Asn415 and Asn433 are each glycosylated (N-linked (GlcNAc...) asparagine). The pore-forming intramembrane region spans 449–470; sequence VYISSLYFTMTSLTSVGFGNIA. Residues 463–468 carry the Selectivity filter motif; it reads SVGFGN. At 471 to 477 the chain is on the extracellular side; that stretch reads PSTDIEK. A helical transmembrane segment spans residues 478 to 498; sequence IFAVAIMMIGSLLYATIFGNV. At 499 to 989 the chain is on the cytoplasmic side; that stretch reads TTIFQQMYAN…ESDRDIFGAS (491 aa). The interval 673-770 is calmodulin-binding; it reads KRDALQKVLE…LDDLDVEKGN (98 aa). Residues 699-701 form an interaction with cyclic nucleotide-binding pocket region; the sequence is YNL. Basic and acidic residues-rich tracts occupy residues 857–879 and 887–901; these read ESME…KTDS and SDLR…RSPQ. Disordered regions lie at residues 857-905 and 961-989; these read ESME…DRSP and RGSA…FGAS. Residues 924–964 form a CAD (involved in subunit assembly) region; the sequence is ATVLEVKYELKEDIKALNAKMTSIEKQLSEILRILMSRGSA. The span at 962-979 shows a compositional bias: polar residues; sequence GSAQSPQETGEISRPQSP. Phosphoserine is present on residues Ser974, Ser978, and Ser981. Positions 980–989 are enriched in basic and acidic residues; sequence ESDRDIFGAS.

The protein belongs to the potassium channel family. H (Eag) (TC 1.A.1.20) subfamily. Kv10.1/KCNH1 sub-subfamily. In terms of assembly, homomultimer. The potassium channel is composed of a homo- or heterotetrameric complex of pore-forming alpha subunits that can associate with modulating beta subunits. Heteromultimer with KCNH5/EAG2. Interacts with ALG10B. Interacts with RABEP1. Interacts (via C-terminus) with CTTN. Interacts (via C-terminal cytoplasmic region) with Ca(2+)-bound calmodulin. In terms of processing, channel activity is regulated via tyrosine phosphorylation/dephosphorylation by SRC and PTPN6. Detected in brain (at protein level). Highly expressed in olfactory bulb. Detected in brain cortex, hippocampus, brain stem, striatum, thalamus, hypothalamus and spinal cord.

It localises to the cell membrane. It is found in the nucleus inner membrane. The protein localises to the cell projection. Its subcellular location is the dendrite. The protein resides in the axon. It localises to the presynaptic cell membrane. It is found in the perikaryon. The protein localises to the postsynaptic density membrane. Its subcellular location is the early endosome membrane. The enzyme catalyses K(+)(in) = K(+)(out). Its activity is regulated as follows. Channel activity is inhibited by interaction with Ca(2+)-bound calmodulin. Interaction of a single pore-forming alpha subunit with a calmodulin chain is sufficient to promote channel closure. Channel activity is not regulated by cyclic nucleotides. Channel activity is inhibited by binding intracellular phosphatidylinositol-3,5-bisphosphate and phosphatidylinositol-4,5-bisphosphate (PIP2), but is not inhibited by phosphatidylinositol 4-phosphate. Its function is as follows. Pore-forming (alpha) subunit of a voltage-gated delayed rectifier potassium channel that mediates outward-rectifying potassium currents which, on depolarization, reaches a steady-state level and do not inactivate. The activation kinetics depend on the prepulse potential and external divalent cation concentration. With negative prepulses, the current activation is delayed and slowed down several fold, whereas more positive prepulses speed up activation. The time course of activation is biphasic with a fast and a slowly activating current component. Activates at more positive membrane potentials and exhibit a steeper activation curve. Channel properties are modulated by subunit assembly. Mediates IK(NI) current in myoblasts. Involved in the regulation of cell proliferation and differentiation, in particular adipogenic and osteogenic differentiation in bone marrow-derived mesenchymal stem cells (MSCs). This chain is Voltage-gated delayed rectifier potassium channel KCNH1, found in Mus musculus (Mouse).